The chain runs to 95 residues: Co-chaperonin GroES (95 aa).

This sequence belongs to the GroES chaperonin family. In terms of assembly, heptamer of 7 subunits arranged in a ring. Interacts with the chaperonin GroEL.

Its subcellular location is the cytoplasm. Its function is as follows. Together with the chaperonin GroEL, plays an essential role in assisting protein folding. The GroEL-GroES system forms a nano-cage that allows encapsulation of the non-native substrate proteins and provides a physical environment optimized to promote and accelerate protein folding. GroES binds to the apical surface of the GroEL ring, thereby capping the opening of the GroEL channel. The protein is Co-chaperonin GroES of Rickettsia prowazekii (strain Madrid E).